The chain runs to 163 residues: Neurotrophin-3 (163 aa).

The N-terminal stretch at 1 to 3 (IQS) is a signal peptide. A propeptide spanning residues 4–119 (TSMDQGILTE…VLNRTSRRKR (116 aa)) is cleaved from the precursor. Asparagine 112 carries N-linked (GlcNAc...) asparagine glycosylation.

The protein belongs to the NGF-beta family.

The protein resides in the secreted. Seems to promote the survival of visceral and proprioceptive sensory neurons. This Epicrates cenchria (Rainbow boa) protein is Neurotrophin-3 (NTF3).